The chain runs to 256 residues: Doublecortin domain-containing protein (256 aa).

The tract at residues 71–103 (NVFERLTDTAYYTGSHRERFDEFGNGRGIAGRE) is partial p25alpha domain. Residues 152-226 (RLMWLYRNGD…AKYLCTSGEP (75 aa)) enclose the Doublecortin domain.

The protein localises to the cytoplasm. The protein resides in the cytoskeleton. In terms of biological role, specifically required in the formation and maintenance of the conoid fibers; the conoid is a component of the cytoskeletal apical complex, which is composed of a left-handed spiral of 14 fibers made from a nontubular tubulin polymer. Promotes the organization, curvature, and stability of the conoid fibers, and probably bridges other conoid components to the tubulin core. This chain is Doublecortin domain-containing protein, found in Toxoplasma gondii (strain ATCC 50861 / VEG).